A 367-amino-acid polypeptide reads, in one-letter code: Anhydro-N-acetylmuramic acid kinase (367 aa).

11 to 18 (GTSLDGVD) serves as a coordination point for ATP.

Belongs to the anhydro-N-acetylmuramic acid kinase family.

The enzyme catalyses 1,6-anhydro-N-acetyl-beta-muramate + ATP + H2O = N-acetyl-D-muramate 6-phosphate + ADP + H(+). It functions in the pathway amino-sugar metabolism; 1,6-anhydro-N-acetylmuramate degradation. The protein operates within cell wall biogenesis; peptidoglycan recycling. Its function is as follows. Catalyzes the specific phosphorylation of 1,6-anhydro-N-acetylmuramic acid (anhMurNAc) with the simultaneous cleavage of the 1,6-anhydro ring, generating MurNAc-6-P. Is required for the utilization of anhMurNAc either imported from the medium or derived from its own cell wall murein, and thus plays a role in cell wall recycling. The sequence is that of Anhydro-N-acetylmuramic acid kinase from Chromobacterium violaceum (strain ATCC 12472 / DSM 30191 / JCM 1249 / CCUG 213 / NBRC 12614 / NCIMB 9131 / NCTC 9757 / MK).